Reading from the N-terminus, the 339-residue chain is MTDVPTSAPRSTSKSEFSHETVLLFETVAAVLGEKSLNDNTPKHDGIYVDATFGRGGHSKLLLNYLSDDAKLFVFDKDPEAIDVANDLAAEDKRVIVVHDSFADMTQCLNSRGVSQVDGIMADLGVSSPQLDDGSRGFSFMRDGAIDMRMDTSRGQPVGEWLQTVDEETLADVLYDFGEERHSRRIARAIKGMTQYTSTLELAEVIKQAHPKWQKGKHPATQSFQAMRIFINNELGDIDSFLAQSLTLLAPQGQLAVISFHSLEDRRIKQFLQRHSRGQYPEDENLPMPPQRPRYFSKPKRIAPSKAEVTVNNRSRSAWLRVATRTDTPYNTDPSPQHS.

S-adenosyl-L-methionine contacts are provided by residues 56–58, Asp-76, Phe-102, Asp-123, and Gln-130; that span reads GGH. 2 disordered regions span residues 274–309 and 320–339; these read RHSRGQYPEDENLPMPPQRPRYFSKPKRIAPSKAEV and LRVATRTDTPYNTDPSPQHS. Residues 325–339 are compositionally biased toward polar residues; that stretch reads RTDTPYNTDPSPQHS.

The protein belongs to the methyltransferase superfamily. RsmH family.

Its subcellular location is the cytoplasm. The catalysed reaction is cytidine(1402) in 16S rRNA + S-adenosyl-L-methionine = N(4)-methylcytidine(1402) in 16S rRNA + S-adenosyl-L-homocysteine + H(+). Functionally, specifically methylates the N4 position of cytidine in position 1402 (C1402) of 16S rRNA. In Psychrobacter sp. (strain PRwf-1), this protein is Ribosomal RNA small subunit methyltransferase H.